The sequence spans 255 residues: NAD kinase (255 aa).

D44 functions as the Proton acceptor in the catalytic mechanism. NAD(+) is bound by residues 44–45 (DG), H49, 114–115 (NE), D144, A152, 155–160 (SAYNLS), and Q216.

The protein belongs to the NAD kinase family. The cofactor is a divalent metal cation.

It is found in the cytoplasm. It catalyses the reaction NAD(+) + ATP = ADP + NADP(+) + H(+). Its function is as follows. Involved in the regulation of the intracellular balance of NAD and NADP, and is a key enzyme in the biosynthesis of NADP. Catalyzes specifically the phosphorylation on 2'-hydroxyl of the adenosine moiety of NAD to yield NADP. The chain is NAD kinase from Rickettsia peacockii (strain Rustic).